Here is a 468-residue protein sequence, read N- to C-terminus: Na(+)/H(+) antiporter NhaA (468 aa).

Helical transmembrane passes span 32 to 52, 83 to 103, 119 to 139, 148 to 168, 178 to 198, 205 to 225, 320 to 340, 354 to 374, 397 to 417, and 428 to 448; these read FLHI…IALL, LHFW…GMEI, ALPM…YLAI, GWAV…ALLG, FLLA…AVAF, GGFL…WIGV, ALHP…NAGV, GAMF…IVSV, LVGL…TLAF, and LGVL…GFIY.

Belongs to the NhaA Na(+)/H(+) (TC 2.A.33) antiporter family.

Its subcellular location is the cell inner membrane. The enzyme catalyses Na(+)(in) + 2 H(+)(out) = Na(+)(out) + 2 H(+)(in). Functionally, na(+)/H(+) antiporter that extrudes sodium in exchange for external protons. This Cupriavidus necator (strain ATCC 17699 / DSM 428 / KCTC 22496 / NCIMB 10442 / H16 / Stanier 337) (Ralstonia eutropha) protein is Na(+)/H(+) antiporter NhaA.